Here is a 213-residue protein sequence, read N- to C-terminus: ATP synthase subunit b 2 (213 aa).

A disordered region spans residues 1 to 45; that stretch reads MFVTEAYAQSAPTVGETHTETPAVGQPQPEATHTETGVAHGAEHG. Residues 57-76 form a helical membrane-spanning segment; the sequence is TYASQVLWLAITFGLFYLLM.

It belongs to the ATPase B chain family. F-type ATPases have 2 components, F(1) - the catalytic core - and F(0) - the membrane proton channel. F(1) has five subunits: alpha(3), beta(3), gamma(1), delta(1), epsilon(1). F(0) has three main subunits: a(1), b(2) and c(10-14). The alpha and beta chains form an alternating ring which encloses part of the gamma chain. F(1) is attached to F(0) by a central stalk formed by the gamma and epsilon chains, while a peripheral stalk is formed by the delta and b chains.

It is found in the cell inner membrane. F(1)F(0) ATP synthase produces ATP from ADP in the presence of a proton or sodium gradient. F-type ATPases consist of two structural domains, F(1) containing the extramembraneous catalytic core and F(0) containing the membrane proton channel, linked together by a central stalk and a peripheral stalk. During catalysis, ATP synthesis in the catalytic domain of F(1) is coupled via a rotary mechanism of the central stalk subunits to proton translocation. In terms of biological role, component of the F(0) channel, it forms part of the peripheral stalk, linking F(1) to F(0). The b'-subunit is a diverged and duplicated form of b found in plants and photosynthetic bacteria. The chain is ATP synthase subunit b 2 (atpF2) from Agrobacterium fabrum (strain C58 / ATCC 33970) (Agrobacterium tumefaciens (strain C58)).